The sequence spans 283 residues: Elongation factor Ts (283 aa).

The interval 79–82 (TDFV) is involved in Mg(2+) ion dislocation from EF-Tu.

This sequence belongs to the EF-Ts family.

It localises to the cytoplasm. Its function is as follows. Associates with the EF-Tu.GDP complex and induces the exchange of GDP to GTP. It remains bound to the aminoacyl-tRNA.EF-Tu.GTP complex up to the GTP hydrolysis stage on the ribosome. The sequence is that of Elongation factor Ts from Shewanella amazonensis (strain ATCC BAA-1098 / SB2B).